The sequence spans 556 residues: Arginine--tRNA ligase (556 aa).

Positions 132–142 (ANPTGPIHLGG) match the 'HIGH' region motif.

Belongs to the class-I aminoacyl-tRNA synthetase family. Monomer.

The protein resides in the cytoplasm. It carries out the reaction tRNA(Arg) + L-arginine + ATP = L-arginyl-tRNA(Arg) + AMP + diphosphate. The protein is Arginine--tRNA ligase of Kocuria rhizophila (strain ATCC 9341 / DSM 348 / NBRC 103217 / DC2201).